The primary structure comprises 90 residues: Probable Fe(2+)-trafficking protein (90 aa).

Belongs to the Fe(2+)-trafficking protein family.

Functionally, could be a mediator in iron transactions between iron acquisition and iron-requiring processes, such as synthesis and/or repair of Fe-S clusters in biosynthetic enzymes. This chain is Probable Fe(2+)-trafficking protein, found in Paracidovorax citrulli (strain AAC00-1) (Acidovorax citrulli).